Consider the following 494-residue polypeptide: Ell-associated factor Eaf (494 aa).

Over residues 119 to 138 (KTRSEVTNKPSLMSATNAPM) the composition is skewed to polar residues. Disordered stretches follow at residues 119 to 212 (KTRS…PAWH) and 243 to 494 (QANI…DDDD). Residues 139–156 (SNGAPVPSSAAAGTGSAG) show a composition bias toward low complexity. The span at 159–178 (ENSTMRISSKTKVSTGSRRN) shows a compositional bias: polar residues. Serine 188 carries the post-translational modification Phosphoserine. Polar residues-rich tracts occupy residues 243–256 (QANISGSSTGSSAG) and 280–306 (QQLTQRSSPPMQQQQHQNYGRGSNNYA). Low complexity predominate over residues 307–319 (QQQQQQQQQQLQQ). Over residues 320–332 (RASFSHSNHSNSM) the composition is skewed to polar residues. The span at 344-373 (QTAQSMAQAAAALEQQIGGELSASSSSSES) shows a compositional bias: low complexity. Acidic residues predominate over residues 374-389 (DSSDSDSGSDSDDSTE). The span at 414-424 (HQQQQHMHQLP) shows a compositional bias: low complexity. Over residues 437–454 (SHHHHQQQQQSHHHHHHQ) the composition is skewed to basic residues. Composition is skewed to low complexity over residues 455–464 (QQQQQQHQQS) and 475–488 (NDLLQNDLQLSSNS).

Belongs to the EAF family.

It is found in the nucleus. Promotes transcriptional elongation by Su(Tpl)/ELL. Essential for development. This Drosophila virilis (Fruit fly) protein is Ell-associated factor Eaf.